The chain runs to 199 residues: Charged multivesicular body protein 1b (199 aa).

Residues 26–48 are a coiled coil; sequence DKEEKAEKAKIKKAIQKGNMEVA. The segment at 132–156 is interaction with IST1; that stretch reads MEDTMSSTTTLTTPQNQVDMLLQEM. Residues 167–199 are disordered; it reads ELPQGQTGSVGTSVASAEQDELSQRLARLRDQV. Residues 170–182 show a composition bias toward polar residues; it reads QGQTGSVGTSVAS. Positions 174–199 are interaction with SPAST; the sequence is GSVGTSVASAEQDELSQRLARLRDQV. A coiled-coil region spans residues 178–199; it reads TSVASAEQDELSQRLARLRDQV. Residues 180–196 form an interaction with VPS4A, MITD1 and STAMBP region; the sequence is VASAEQDELSQRLARLR. Residues 180–199 are interaction with VTA1; it reads VASAEQDELSQRLARLRDQV. The interaction with VPS4B stretch occupies residues 183–199; the sequence is AEQDELSQRLARLRDQV. An MIT-interacting motif motif is present at residues 186–196; that stretch reads DELSQRLARLR.

It belongs to the SNF7 family. As to quaternary structure, probable peripherally associated component of the endosomal sorting required for transport complex III (ESCRT-III). ESCRT-III components are thought to multimerize to form a flat lattice on the perimeter membrane of the endosome. Several assembly forms of ESCRT-III may exist that interact and act sequentially. Interacts with CHMP1A. Interacts with VTA1; the interaction probably involves the open conformation of CHMP1B. Interacts with CHMP2A. Interacts with VPS4A; the interaction is direct. Interacts with VPS4B; the interaction is direct. Interacts with SPAST (via MIT domain); the interaction is direct. Interacts with IST1. Interacts with MITD1. Interacts with STAMBP. Widely expressed. Expressed in pancreas, kidney, skeletal muscle, liver, lung, placenta and brain.

It localises to the cytoplasm. It is found in the cytosol. Its subcellular location is the endosome. The protein localises to the late endosome membrane. Its function is as follows. Probable peripherally associated component of the endosomal sorting required for transport complex III (ESCRT-III) which is involved in multivesicular bodies (MVBs) formation and sorting of endosomal cargo proteins into MVBs. MVBs contain intraluminal vesicles (ILVs) that are generated by invagination and scission from the limiting membrane of the endosome and mostly are delivered to lysosomes enabling degradation of membrane proteins, such as stimulated growth factor receptors, lysosomal enzymes and lipids. The MVB pathway appears to require the sequential function of ESCRT-O, -I,-II and -III complexes. ESCRT-III proteins mostly dissociate from the invaginating membrane before the ILV is released. The ESCRT machinery also functions in topologically equivalent membrane fission events, such as the terminal stages of cytokinesis and the budding of enveloped viruses (HIV-1 and other lentiviruses). ESCRT-III proteins are believed to mediate the necessary vesicle extrusion and/or membrane fission activities, possibly in conjunction with the AAA ATPase VPS4. Involved in cytokinesis. Involved in recruiting VPS4A and/or VPS4B and SPAST to the midbody of dividing cells. Involved in HIV-1 p6- and p9-dependent virus release. The protein is Charged multivesicular body protein 1b (CHMP1B) of Homo sapiens (Human).